Here is a 330-residue protein sequence, read N- to C-terminus: ADP-L-glycero-D-manno-heptose-6-epimerase (330 aa).

NADP(+) is bound by residues 11 to 12, 32 to 33, Lys39, Lys54, 75 to 79, and Asn92; these read FI, DN, and EGACS. Catalysis depends on Tyr139, which acts as the Proton acceptor. Lys143 provides a ligand contact to NADP(+). Asn168 provides a ligand contact to substrate. Val169 and Lys177 together coordinate NADP(+). Lys177 functions as the Proton acceptor in the catalytic mechanism. Substrate contacts are provided by residues Arg179, His186, 200–203, Arg213, and Tyr292; that span reads FGEY.

Belongs to the NAD(P)-dependent epimerase/dehydratase family. HldD subfamily. In terms of assembly, homopentamer. NADP(+) is required as a cofactor.

The catalysed reaction is ADP-D-glycero-beta-D-manno-heptose = ADP-L-glycero-beta-D-manno-heptose. Its pathway is nucleotide-sugar biosynthesis; ADP-L-glycero-beta-D-manno-heptose biosynthesis; ADP-L-glycero-beta-D-manno-heptose from D-glycero-beta-D-manno-heptose 7-phosphate: step 4/4. Catalyzes the interconversion between ADP-D-glycero-beta-D-manno-heptose and ADP-L-glycero-beta-D-manno-heptose via an epimerization at carbon 6 of the heptose. The polypeptide is ADP-L-glycero-D-manno-heptose-6-epimerase (Burkholderia ambifaria (strain ATCC BAA-244 / DSM 16087 / CCUG 44356 / LMG 19182 / AMMD) (Burkholderia cepacia (strain AMMD))).